The following is a 134-amino-acid chain: ATP synthase epsilon chain (134 aa).

Residues 100–134 (NQKLQNENLSEEEKEHYEKQRSRSQALLNLASAKV) form a disordered region. Residues 110 to 120 (EEEKEHYEKQR) are compositionally biased toward basic and acidic residues.

This sequence belongs to the ATPase epsilon chain family. F-type ATPases have 2 components, CF(1) - the catalytic core - and CF(0) - the membrane proton channel. CF(1) has five subunits: alpha(3), beta(3), gamma(1), delta(1), epsilon(1). CF(0) has three main subunits: a, b and c.

The protein localises to the cell inner membrane. Produces ATP from ADP in the presence of a proton gradient across the membrane. The sequence is that of ATP synthase epsilon chain from Sulfurihydrogenibium sp. (strain YO3AOP1).